A 291-amino-acid chain; its full sequence is ATP synthase gamma chain (291 aa).

It belongs to the ATPase gamma chain family. As to quaternary structure, F-type ATPases have 2 components, CF(1) - the catalytic core - and CF(0) - the membrane proton channel. CF(1) has five subunits: alpha(3), beta(3), gamma(1), delta(1), epsilon(1). CF(0) has three main subunits: a, b and c.

It localises to the cell inner membrane. Its function is as follows. Produces ATP from ADP in the presence of a proton gradient across the membrane. The gamma chain is believed to be important in regulating ATPase activity and the flow of protons through the CF(0) complex. This is ATP synthase gamma chain from Cupriavidus pinatubonensis (strain JMP 134 / LMG 1197) (Cupriavidus necator (strain JMP 134)).